Consider the following 160-residue polypeptide: S-protein homolog 13 (160 aa).

An N-terminal signal peptide occupies residues 1 to 27; the sequence is MGRDLGWCFFVATVLLAAVLLPAPTIA.

Belongs to the plant self-incompatibility (S1) protein family.

It is found in the secreted. The sequence is that of S-protein homolog 13 from Arabidopsis thaliana (Mouse-ear cress).